The primary structure comprises 98 residues: uncharacterized protein (98 aa).

Belongs to the IS150/IS1296 orfA family.

This is an uncharacterized protein from Haemophilus influenzae (strain ATCC 51907 / DSM 11121 / KW20 / Rd).